We begin with the raw amino-acid sequence, 601 residues long: Glutathione-regulated potassium-efflux system protein KefB (601 aa).

13 consecutive transmembrane segments (helical) span residues 4 to 24, 29 to 49, 55 to 75, 87 to 107, 115 to 135, 152 to 172, 177 to 197, 207 to 227, 230 to 250, 268 to 288, 291 to 311, 326 to 346, and 356 to 376; these read SDLL…VPLA, IGAV…GLGF, EILH…GLEL, IFGV…GLLM, AAVV…LQLM, VLLF…LLAG, HVNW…LIGG, FIAS…LVLG, LFME…GVLL, GLLL…GVLY, LLWV…VLYL, FAGV…LPAS, and ALLL…MKGI. An RCK N-terminal domain is found at 400-519; the sequence is KPQVIIVGFG…AGVTQFSRET (120 aa).

This sequence belongs to the monovalent cation:proton antiporter 2 (CPA2) transporter (TC 2.A.37) family. KefB subfamily. As to quaternary structure, interacts with the regulatory subunit KefG.

It localises to the cell inner membrane. Its function is as follows. Pore-forming subunit of a potassium efflux system that confers protection against electrophiles. Catalyzes K(+)/H(+) antiport. The sequence is that of Glutathione-regulated potassium-efflux system protein KefB from Klebsiella pneumoniae subsp. pneumoniae (strain ATCC 700721 / MGH 78578).